Here is a 483-residue protein sequence, read N- to C-terminus: UDP-N-acetylmuramate--L-alanine ligase (483 aa).

128–134 provides a ligand contact to ATP; sequence GTHGKTT.

This sequence belongs to the MurCDEF family.

It localises to the cytoplasm. The catalysed reaction is UDP-N-acetyl-alpha-D-muramate + L-alanine + ATP = UDP-N-acetyl-alpha-D-muramoyl-L-alanine + ADP + phosphate + H(+). The protein operates within cell wall biogenesis; peptidoglycan biosynthesis. Functionally, cell wall formation. In Shewanella violacea (strain JCM 10179 / CIP 106290 / LMG 19151 / DSS12), this protein is UDP-N-acetylmuramate--L-alanine ligase.